The chain runs to 113 residues: Nitrogenase-stabilizing/protective protein NifW (113 aa).

This sequence belongs to the NifW family. In terms of assembly, homotrimer; associates with NifD.

Functionally, may protect the nitrogenase Fe-Mo protein from oxidative damage. The protein is Nitrogenase-stabilizing/protective protein NifW of Dechloromonas aromatica (strain RCB).